The primary structure comprises 261 residues: Thioesterase AMT4 (261 aa).

It belongs to the AMT4 thioesterase family.

Its pathway is mycotoxin biosynthesis. Its function is as follows. Thioesterase; part of the gene clusters that mediate the biosynthesis of AM-toxins, host-selective toxins (HSTs) causing Alternaria blotch on apple, a worldwide distributed disease. AM-toxins are cyclic depsipeptides containing the 3 residues 2-hydroxy-isovaleric acid (2-HIV), dehydroalanine, L-alanine which are common for all 3 AM-toxins I to III. The fourth precursor is L-alpha-amino-methoxyphenyl-valeric acid (L-Amv) for AM-toxin I, L-alpha-amino-phenyl-valeric acid (L-Apv) for AM-toxin II, and L-alpha-amino-hydroxyphenyl-valeric acid (L-Ahv) for AM-toxin III. AM-toxins have two target sites for affecting susceptible apple cells; they cause invagination of the plasma membrane and electrolyte loss and chloroplast disorganization. The non-ribosomal peptide synthetase AMT1 contains 4 catalytic modules and is responsible for activation of each residue in AM-toxin. The aldo-keto reductase AMT2 catalyzes the conversion of 2-keto-isovaleric acid (2-KIV) to 2-hydroxy-isovaleric acid (2-HIV), one of the precursor residues incorporated by AMT1 during AM-toxin biosynthesis, by reduction of its ketone to an alcohol. The cytochrome P450 monooxygenase AMT3 and the thioesterase AMT4 are also important for AM-toxin production, but their exact function within the AM-toxin biosynthesis are not known yet. Up to 21 proteins (including AMT1 to AMT4) are predicted to be involved in AM-toxin biosynthesis since their expression ishighly up-regulated in AM-toxin-producing cultures. This is Thioesterase AMT4 from Alternaria alternata (Alternaria rot fungus).